We begin with the raw amino-acid sequence, 81 residues long: Sulfur carrier protein TusA (81 aa).

Cys-19 acts as the Cysteine persulfide intermediate in catalysis.

The protein belongs to the sulfur carrier protein TusA family. Interacts with IscS.

It localises to the cytoplasm. Its pathway is tRNA modification. Functionally, sulfur carrier protein involved in sulfur trafficking in the cell. Part of a sulfur-relay system required for 2-thiolation during synthesis of 2-thiouridine of the modified wobble base 5-methylaminomethyl-2-thiouridine (mnm(5)s(2)U) in tRNA. Interacts with IscS and stimulates its cysteine desulfurase activity. Accepts an activated sulfur from IscS, which is then transferred to TusD, and thus determines the direction of sulfur flow from IscS to 2-thiouridine formation. Also appears to be involved in sulfur transfer for the biosynthesis of molybdopterin. In Citrobacter koseri (strain ATCC BAA-895 / CDC 4225-83 / SGSC4696), this protein is Sulfur carrier protein TusA.